Consider the following 495-residue polypeptide: Cytochrome P450 2E1 (495 aa).

298–303 contributes to the substrate binding site; that stretch reads FAGTET. A heme-binding site is contributed by Cys437.

It belongs to the cytochrome P450 family. Interacts with chaperones HSP70 and HSP90; this interaction is required for initial targeting to mitochondria. It depends on heme as a cofactor.

It localises to the endoplasmic reticulum membrane. The protein resides in the microsome membrane. The protein localises to the mitochondrion inner membrane. The enzyme catalyses an organic molecule + reduced [NADPH--hemoprotein reductase] + O2 = an alcohol + oxidized [NADPH--hemoprotein reductase] + H2O + H(+). The catalysed reaction is (5Z,8Z,11Z)-eicosatrienoate + reduced [NADPH--hemoprotein reductase] + O2 = 19-hydroxy-(5Z,8Z,11Z)-eicosatrienoate + oxidized [NADPH--hemoprotein reductase] + H2O + H(+). It carries out the reaction (5Z,8Z,11Z,14Z,17Z)-eicosapentaenoate + reduced [NADPH--hemoprotein reductase] + O2 = 19-hydroxy-(5Z,8Z,11Z,14Z,17Z)-eicosapentaenoate + oxidized [NADPH--hemoprotein reductase] + H2O + H(+). It catalyses the reaction (4Z,7Z,10Z,13Z,16Z,19Z)-docosahexaenoate + reduced [NADPH--hemoprotein reductase] + O2 = 21-hydroxy-(4Z,7Z,10Z,13Z,16Z,19Z)-docosahexaenoate + oxidized [NADPH--hemoprotein reductase] + H2O + H(+). The enzyme catalyses dodecanoate + reduced [NADPH--hemoprotein reductase] + O2 = 11-hydroxydodecanoate + oxidized [NADPH--hemoprotein reductase] + H2O + H(+). The catalysed reaction is tetradecanoate + reduced [NADPH--hemoprotein reductase] + O2 = 13-hydroxytetradecanoate + oxidized [NADPH--hemoprotein reductase] + H2O + H(+). It carries out the reaction 4-nitrophenol + NADPH + O2 + H(+) = 4-nitrocatechol + NADP(+) + H2O. It participates in lipid metabolism; fatty acid metabolism. The omega-1 hydroxylase activity is stimulated by cytochrome b5. In terms of biological role, a cytochrome P450 monooxygenase involved in the metabolism of fatty acids. Mechanistically, uses molecular oxygen inserting one oxygen atom into a substrate, and reducing the second into a water molecule, with two electrons provided by NADPH via cytochrome P450 reductase (NADPH--hemoprotein reductase). Catalyzes the hydroxylation of carbon-hydrogen bonds. Hydroxylates fatty acids specifically at the omega-1 position displaying the highest catalytic activity for saturated fatty acids. May be involved in the oxidative metabolism of xenobiotics. This chain is Cytochrome P450 2E1 (CYP2E1), found in Sus scrofa (Pig).